The sequence spans 579 residues: Glutamine--tRNA ligase (579 aa).

A 'HIGH' region motif is present at residues P41 to H51. ATP is bound by residues E42–N44 and H48–A54. The L-glutamine site is built by D74 and Y218. Residues T237, R285–L286, and M293–K295 each bind ATP. A 'KMSKS' region motif is present at residues V292–R296.

Belongs to the class-I aminoacyl-tRNA synthetase family. In terms of assembly, monomer.

Its subcellular location is the cytoplasm. It catalyses the reaction tRNA(Gln) + L-glutamine + ATP = L-glutaminyl-tRNA(Gln) + AMP + diphosphate. This is Glutamine--tRNA ligase from Xanthomonas campestris pv. campestris (strain 8004).